A 99-amino-acid polypeptide reads, in one-letter code: Aspartyl/glutamyl-tRNA(Asn/Gln) amidotransferase subunit C (99 aa).

This sequence belongs to the GatC family. As to quaternary structure, heterotrimer of A, B and C subunits.

The catalysed reaction is L-glutamyl-tRNA(Gln) + L-glutamine + ATP + H2O = L-glutaminyl-tRNA(Gln) + L-glutamate + ADP + phosphate + H(+). It catalyses the reaction L-aspartyl-tRNA(Asn) + L-glutamine + ATP + H2O = L-asparaginyl-tRNA(Asn) + L-glutamate + ADP + phosphate + 2 H(+). Functionally, allows the formation of correctly charged Asn-tRNA(Asn) or Gln-tRNA(Gln) through the transamidation of misacylated Asp-tRNA(Asn) or Glu-tRNA(Gln) in organisms which lack either or both of asparaginyl-tRNA or glutaminyl-tRNA synthetases. The reaction takes place in the presence of glutamine and ATP through an activated phospho-Asp-tRNA(Asn) or phospho-Glu-tRNA(Gln). In Paraburkholderia phytofirmans (strain DSM 17436 / LMG 22146 / PsJN) (Burkholderia phytofirmans), this protein is Aspartyl/glutamyl-tRNA(Asn/Gln) amidotransferase subunit C.